The following is a 145-amino-acid chain: Alpha-amylase/trypsin inhibitor CM1 (145 aa).

Positions 1–25 (MASKSSISPLLLATVLVSVFAAATA) are cleaved as a signal peptide.

Belongs to the protease inhibitor I6 (cereal trypsin/alpha-amylase inhibitor) family. In terms of assembly, subunit of the tetrameric inhibitor. As to expression, endosperm.

The protein resides in the secreted. In terms of biological role, alpha-amylase/trypsin inhibitor. It could be involved in insect defense mechanisms. This chain is Alpha-amylase/trypsin inhibitor CM1, found in Triticum aestivum (Wheat).